Here is a 202-residue protein sequence, read N- to C-terminus: 3-isopropylmalate dehydratase small subunit (202 aa).

It belongs to the LeuD family. LeuD type 1 subfamily. In terms of assembly, heterodimer of LeuC and LeuD.

It catalyses the reaction (2R,3S)-3-isopropylmalate = (2S)-2-isopropylmalate. It participates in amino-acid biosynthesis; L-leucine biosynthesis; L-leucine from 3-methyl-2-oxobutanoate: step 2/4. Functionally, catalyzes the isomerization between 2-isopropylmalate and 3-isopropylmalate, via the formation of 2-isopropylmaleate. This chain is 3-isopropylmalate dehydratase small subunit, found in Rhizobium johnstonii (strain DSM 114642 / LMG 32736 / 3841) (Rhizobium leguminosarum bv. viciae).